The following is a 188-amino-acid chain: dTTP/UTP pyrophosphatase (188 aa).

The active-site Proton acceptor is the Asp-70.

Belongs to the Maf family. YhdE subfamily. It depends on a divalent metal cation as a cofactor.

It localises to the cytoplasm. The enzyme catalyses dTTP + H2O = dTMP + diphosphate + H(+). It carries out the reaction UTP + H2O = UMP + diphosphate + H(+). Functionally, nucleoside triphosphate pyrophosphatase that hydrolyzes dTTP and UTP. May have a dual role in cell division arrest and in preventing the incorporation of modified nucleotides into cellular nucleic acids. This chain is dTTP/UTP pyrophosphatase, found in Clostridium botulinum (strain Alaska E43 / Type E3).